The sequence spans 150 residues: Large ribosomal subunit protein uL11 (150 aa).

This sequence belongs to the universal ribosomal protein uL11 family. Part of the ribosomal stalk of the 50S ribosomal subunit. Interacts with L10 and the large rRNA to form the base of the stalk. L10 forms an elongated spine to which L12 dimers bind in a sequential fashion forming a multimeric L10(L12)X complex. One or more lysine residues are methylated.

Forms part of the ribosomal stalk which helps the ribosome interact with GTP-bound translation factors. The chain is Large ribosomal subunit protein uL11 from Ureaplasma parvum serovar 3 (strain ATCC 27815 / 27 / NCTC 11736).